Reading from the N-terminus, the 387-residue chain is D(4) dopamine receptor (387 aa).

At 1–34 (MGNSSATEDGGLLAGRGPESLGTGAGLGGAGAAA) the chain is on the extracellular side. N3 carries an N-linked (GlcNAc...) asparagine glycan. A helical membrane pass occupies residues 35 to 57 (LVGGVLLIGLVLAGNSLVCVSVA). The Cytoplasmic portion of the chain corresponds to 58–67 (SERTLQTPTN). A helical transmembrane segment spans residues 68–90 (YFIVSLAAADLLLAVLVLPLFVY). Residue D77 participates in Na(+) binding. Residues 91–106 (SEVQGGVWLLSPRLCD) are Extracellular-facing. C105 and C180 are disulfide-bonded. Residues 107–128 (TLMAMDVMLCTASIFNLCAISV) traverse the membrane as a helical segment. Na(+) is bound at residue S119. The Cytoplasmic segment spans residues 129–146 (DRFVAVTVPLRYNQQGQC). A helical membrane pass occupies residues 147–170 (QLLLIAATWLLSAAVASPVVCGLN). Residues 171-186 (DVPGRDPAVCCLENRD) lie on the Extracellular side of the membrane. A helical membrane pass occupies residues 187–208 (YVVYSSVCSFFLPCPLMLLLYW). At 209 to 314 (ATFRGLRRWE…ITGRERKAMR (106 aa)) the chain is on the cytoplasmic side. Disordered stretches follow at residues 224-247 (KLHS…TQGP) and 287-306 (AALP…AKIT). The helical transmembrane segment at 315–337 (VLPVVVGAFLVCWTPFFVVHITR) threads the bilayer. Topologically, residues 338–346 (ALCPACFVS) are extracellular. A disulfide bridge links C340 with C343. A helical membrane pass occupies residues 347-369 (PRLVSAVTWLGYVNSALNPIIYT). The Cytoplasmic segment spans residues 370-387 (IFNAEFRSVFRKTLRLRC). A lipid anchor (S-palmitoyl cysteine) is attached at C387.

The protein belongs to the G-protein coupled receptor 1 family. Forms homo- and heterooligomers with DRD2. D4.7 allele exhibits higher affinity for homodimers compared to DRD2 heterodimers, while alleles D42. and 4.4 have similar affinities for both. The interaction with DRD2 may modulate agonist-induced downstream signaling. Interacts with CLIC6. Interacts with GPRASP1. May interact with ADORA2A. Interacts with KLHL12. In terms of processing, palmitoylated. Palmitoylation of the C-terminal Cys is important for normal expression at the cell membrane. Detected in olfactory bulb, hypothalamus, olfactory tubercle, brainstem and striatum.

It is found in the cell membrane. Its function is as follows. Dopamine receptor responsible for neuronal signaling in the mesolimbic system of the brain, an area of the brain that regulates emotion and complex behavior. Activated by dopamine, but also by epinephrine and norepinephrine, and by numerous synthetic agonists and drugs. Agonist binding triggers signaling via G proteins that inhibit adenylyl cyclase. Modulates the circadian rhythm of contrast sensitivity by regulating the rhythmic expression of NPAS2 in the retinal ganglion cells. The chain is D(4) dopamine receptor (Drd4) from Mus musculus (Mouse).